The primary structure comprises 427 residues: Stabilizer of axonemal microtubules 4 (427 aa).

Disordered stretches follow at residues threonine 82 to tryptophan 105, arginine 273 to glutamine 298, and glycine 314 to glutamine 335. Polar residues-rich tracts occupy residues alanine 287 to glutamine 298 and phenylalanine 321 to serine 332.

Microtubule inner protein component of sperm flagellar doublet microtubules. Interacts with PPP1CA.

The protein localises to the cell projection. It localises to the cilium. Its subcellular location is the cytoplasm. It is found in the cytoskeleton. The protein resides in the flagellum axoneme. This chain is Stabilizer of axonemal microtubules 4, found in Mus musculus (Mouse).